The following is a 133-amino-acid chain: Crossover junction endodeoxyribonuclease Hjc (133 aa).

Residue E12 coordinates Mg(2+). Residue S32 is part of the active site. Positions 36 and 49 each coordinate Mg(2+).

This sequence belongs to the Holliday junction resolvase Hjc family. As to quaternary structure, homodimer. Mg(2+) is required as a cofactor.

It carries out the reaction Endonucleolytic cleavage at a junction such as a reciprocal single-stranded crossover between two homologous DNA duplexes (Holliday junction).. A structure-specific endonuclease that resolves Holliday junction (HJ) intermediates during genetic recombination. Cleaves 4-way DNA junctions introducing paired nicks in opposing strands, leaving a 5'-terminal phosphate and a 3'-terminal hydroxyl group that are subsequently ligated to produce recombinant products. This Methanocaldococcus jannaschii (strain ATCC 43067 / DSM 2661 / JAL-1 / JCM 10045 / NBRC 100440) (Methanococcus jannaschii) protein is Crossover junction endodeoxyribonuclease Hjc.